The following is a 244-amino-acid chain: Phosphoadenosine 5'-phosphosulfate reductase (244 aa).

C239 serves as the catalytic Nucleophile; cysteine thiosulfonate intermediate.

Belongs to the PAPS reductase family. CysH subfamily.

Its subcellular location is the cytoplasm. The enzyme catalyses [thioredoxin]-disulfide + sulfite + adenosine 3',5'-bisphosphate + 2 H(+) = [thioredoxin]-dithiol + 3'-phosphoadenylyl sulfate. Its pathway is sulfur metabolism; hydrogen sulfide biosynthesis; sulfite from sulfate: step 3/3. Catalyzes the formation of sulfite from phosphoadenosine 5'-phosphosulfate (PAPS) using thioredoxin as an electron donor. This is Phosphoadenosine 5'-phosphosulfate reductase from Escherichia coli O6:K15:H31 (strain 536 / UPEC).